A 160-amino-acid polypeptide reads, in one-letter code: MMKKNRWFWLVAIIGLGLDQLTKYITVQSFETIGDTFGLWPGVFHLTYVINTGAAFSFFKGGAVWLRWLSLAVSLGLIFLGWYAPRMRIVEQLGYGFILAGALGNGIDRFLFGYVVDFLDFRLINFPVFNLADTFINIGIFFLLLASFPPKSSSQKNTSQ.

4 helical membrane-spanning segments follow: residues 7–27 (WFWL…YITV), 39–59 (LWPG…FSFF), 62–82 (GAVW…FLGW), and 96–116 (GFIL…GYVV). Active-site residues include Asp-117 and Asp-133. A helical membrane pass occupies residues 126-146 (FPVFNLADTFINIGIFFLLLA).

This sequence belongs to the peptidase A8 family.

Its subcellular location is the cell inner membrane. It catalyses the reaction Release of signal peptides from bacterial membrane prolipoproteins. Hydrolyzes -Xaa-Yaa-Zaa-|-(S,diacylglyceryl)Cys-, in which Xaa is hydrophobic (preferably Leu), and Yaa (Ala or Ser) and Zaa (Gly or Ala) have small, neutral side chains.. It functions in the pathway protein modification; lipoprotein biosynthesis (signal peptide cleavage). Functionally, this protein specifically catalyzes the removal of signal peptides from prolipoproteins. This chain is Lipoprotein signal peptidase, found in Gloeothece citriformis (strain PCC 7424) (Cyanothece sp. (strain PCC 7424)).